The following is a 330-amino-acid chain: Alpha/beta hydrolase domain-containing protein VTE7 (330 aa).

The 232-residue stretch at 84-315 (VVLLHCFDSS…GHLPHVENPK (232 aa)) folds into the AB hydrolase-1 domain. Serine 157 (nucleophile) is an active-site residue. Catalysis depends on charge relay system residues aspartate 279 and histidine 307.

This sequence belongs to the AB hydrolase superfamily.

The protein localises to the plastid. It is found in the chloroplast envelope. Its function is as follows. Hydrolase involved in tocopherol (vitamin E) biosynthesis. Releases prenyl alcohols from chlorophyll biosynthetic intermediates, which are then converted to the corresponding diphosphates for tocopherol biosynthesis. Provides most of the phytol from chlorophyll for tocopherol biosynthesis in seeds. This Arabidopsis thaliana (Mouse-ear cress) protein is Alpha/beta hydrolase domain-containing protein VTE7.